Consider the following 134-residue polypeptide: Arginine decarboxylase proenzyme (134 aa).

The Schiff-base intermediate with substrate; via pyruvic acid role is filled by serine 82. Serine 82 bears the Pyruvic acid (Ser); by autocatalysis mark. The Proton acceptor; for processing activity role is filled by histidine 87. Cysteine 102 acts as the Proton donor; for catalytic activity in catalysis.

The protein belongs to the prokaryotic AdoMetDC family. Type 1 subfamily. Heterooctamer of four alpha and four beta chains arranged as a tetramer of alpha/beta heterodimers. It depends on pyruvate as a cofactor. Post-translationally, is synthesized initially as an inactive proenzyme. Formation of the active enzyme involves a self-maturation process in which the active site pyruvoyl group is generated from an internal serine residue via an autocatalytic post-translational modification. Two non-identical subunits are generated from the proenzyme in this reaction, and the pyruvate is formed at the N-terminus of the alpha chain, which is derived from the carboxyl end of the proenzyme. The post-translation cleavage follows an unusual pathway, termed non-hydrolytic serinolysis, in which the side chain hydroxyl group of the serine supplies its oxygen atom to form the C-terminus of the beta chain, while the remainder of the serine residue undergoes an oxidative deamination to produce ammonia and the pyruvoyl group blocking the N-terminus of the alpha chain.

It catalyses the reaction L-arginine + H(+) = agmatine + CO2. Its pathway is amine and polyamine biosynthesis; agmatine biosynthesis; agmatine from L-arginine: step 1/1. Functionally, specifically catalyzes the decarboxylation of L-arginine to agmatine. Has no S-adenosylmethionine decarboxylase (AdoMetDC) activity. The chain is Arginine decarboxylase proenzyme from Saccharolobus islandicus (strain M.16.4 / Kamchatka #3) (Sulfolobus islandicus).